The following is a 208-amino-acid chain: Probable GTP-binding protein EngB (208 aa).

One can recognise an EngB-type G domain in the interval 22–195; sequence GLPEIALAGR…WHSIEEIFIA (174 aa). GTP-binding positions include 30–37, 57–61, 75–78, 142–145, and 174–176; these read GRSNVGKS, GKTRT, DLPG, TKSD, and ISS. S37 and T59 together coordinate Mg(2+).

Belongs to the TRAFAC class TrmE-Era-EngA-EngB-Septin-like GTPase superfamily. EngB GTPase family. It depends on Mg(2+) as a cofactor.

Its function is as follows. Necessary for normal cell division and for the maintenance of normal septation. The chain is Probable GTP-binding protein EngB from Alkaliphilus oremlandii (strain OhILAs) (Clostridium oremlandii (strain OhILAs)).